Reading from the N-terminus, the 532-residue chain is CTP synthase (532 aa).

Residues 1 to 267 (MTKYIFVTGG…DDIVLEHLQL (267 aa)) form an amidoligase domain region. CTP is bound at residue Ser13. Ser13 serves as a coordination point for UTP. Residue 14-19 (SIGKGI) participates in ATP binding. Tyr54 serves as a coordination point for L-glutamine. Asp71 is an ATP binding site. Mg(2+) contacts are provided by Asp71 and Glu141. Residues 148–150 (DIE), 188–193 (KTKPTQ), and Lys224 contribute to the CTP site. UTP-binding positions include 188–193 (KTKPTQ) and Lys224. Residues 292-532 (RIGLVGKYVS…DFVGAALNNK (241 aa)) form the Glutamine amidotransferase type-1 domain. Gly354 contacts L-glutamine. Cys381 serves as the catalytic Nucleophile; for glutamine hydrolysis. L-glutamine contacts are provided by residues 382–385 (LGMQ), Glu405, and Arg462. Catalysis depends on residues His507 and Glu509.

This sequence belongs to the CTP synthase family. Homotetramer.

The enzyme catalyses UTP + L-glutamine + ATP + H2O = CTP + L-glutamate + ADP + phosphate + 2 H(+). It carries out the reaction L-glutamine + H2O = L-glutamate + NH4(+). The catalysed reaction is UTP + NH4(+) + ATP = CTP + ADP + phosphate + 2 H(+). Its pathway is pyrimidine metabolism; CTP biosynthesis via de novo pathway; CTP from UDP: step 2/2. Its activity is regulated as follows. Allosterically activated by GTP, when glutamine is the substrate; GTP has no effect on the reaction when ammonia is the substrate. The allosteric effector GTP functions by stabilizing the protein conformation that binds the tetrahedral intermediate(s) formed during glutamine hydrolysis. Inhibited by the product CTP, via allosteric rather than competitive inhibition. Functionally, catalyzes the ATP-dependent amination of UTP to CTP with either L-glutamine or ammonia as the source of nitrogen. Regulates intracellular CTP levels through interactions with the four ribonucleotide triphosphates. This is CTP synthase from Listeria innocua serovar 6a (strain ATCC BAA-680 / CLIP 11262).